An 87-amino-acid chain; its full sequence is UPF0235 protein TGRD_618 (87 aa).

It belongs to the UPF0235 family.

This is UPF0235 protein TGRD_618 from Endomicrobium trichonymphae.